We begin with the raw amino-acid sequence, 424 residues long: Histidine--tRNA ligase (424 aa).

It belongs to the class-II aminoacyl-tRNA synthetase family. Homodimer.

It is found in the cytoplasm. It carries out the reaction tRNA(His) + L-histidine + ATP = L-histidyl-tRNA(His) + AMP + diphosphate + H(+). This is Histidine--tRNA ligase from Pediococcus pentosaceus (strain ATCC 25745 / CCUG 21536 / LMG 10740 / 183-1w).